A 416-amino-acid polypeptide reads, in one-letter code: Enolase (416 aa).

Q156 provides a ligand contact to (2R)-2-phosphoglycerate. Catalysis depends on E200, which acts as the Proton donor. Mg(2+) is bound by residues D236, E281, and D308. 4 residues coordinate (2R)-2-phosphoglycerate: K333, R362, S363, and K384. K333 (proton acceptor) is an active-site residue.

This sequence belongs to the enolase family. Mg(2+) serves as cofactor.

The protein localises to the cytoplasm. It localises to the secreted. Its subcellular location is the cell surface. It carries out the reaction (2R)-2-phosphoglycerate = phosphoenolpyruvate + H2O. Its pathway is carbohydrate degradation; glycolysis; pyruvate from D-glyceraldehyde 3-phosphate: step 4/5. Its function is as follows. Catalyzes the reversible conversion of 2-phosphoglycerate (2-PG) into phosphoenolpyruvate (PEP). It is essential for the degradation of carbohydrates via glycolysis. The sequence is that of Enolase from Methanothermobacter thermautotrophicus (strain ATCC 29096 / DSM 1053 / JCM 10044 / NBRC 100330 / Delta H) (Methanobacterium thermoautotrophicum).